We begin with the raw amino-acid sequence, 240 residues long: Ubiquinone biosynthesis O-methyltransferase (240 aa).

S-adenosyl-L-methionine-binding residues include arginine 44, glycine 64, aspartate 85, and methionine 129.

Belongs to the methyltransferase superfamily. UbiG/COQ3 family.

It carries out the reaction a 3-demethylubiquinol + S-adenosyl-L-methionine = a ubiquinol + S-adenosyl-L-homocysteine + H(+). The enzyme catalyses a 3-(all-trans-polyprenyl)benzene-1,2-diol + S-adenosyl-L-methionine = a 2-methoxy-6-(all-trans-polyprenyl)phenol + S-adenosyl-L-homocysteine + H(+). It functions in the pathway cofactor biosynthesis; ubiquinone biosynthesis. O-methyltransferase that catalyzes the 2 O-methylation steps in the ubiquinone biosynthetic pathway. This Photorhabdus laumondii subsp. laumondii (strain DSM 15139 / CIP 105565 / TT01) (Photorhabdus luminescens subsp. laumondii) protein is Ubiquinone biosynthesis O-methyltransferase.